The following is a 172-amino-acid chain: Molybdopterin synthase catalytic subunit (172 aa).

Phosphoserine is present on S20. Residues 127-128, K143, and 150-152 each bind substrate; these read HR and KKE.

This sequence belongs to the MoaE family. MOCS2B subfamily. Heterotetramer; composed of 2 small (MOCS2A) and 2 large (MOCS2B) subunits.

It localises to the cytoplasm. The protein resides in the cytosol. The enzyme catalyses 2 [molybdopterin-synthase sulfur-carrier protein]-C-terminal-Gly-aminoethanethioate + cyclic pyranopterin phosphate + H2O = molybdopterin + 2 [molybdopterin-synthase sulfur-carrier protein]-C-terminal Gly-Gly + 2 H(+). It functions in the pathway cofactor biosynthesis; molybdopterin biosynthesis. In terms of biological role, catalytic subunit of the molybdopterin synthase complex, a complex that catalyzes the conversion of precursor Z into molybdopterin. Acts by mediating the incorporation of 2 sulfur atoms from thiocarboxylated MOCS2A into precursor Z to generate a dithiolene group. The polypeptide is Molybdopterin synthase catalytic subunit (Pongo abelii (Sumatran orangutan)).